Here is a 428-residue protein sequence, read N- to C-terminus: Immunoglobulin superfamily member 11 (428 aa).

A signal peptide spans 1-22; it reads MTRRRSAPASWLLVSLLGVATS. Positions 23–136 constitute an Ig-like V-type domain; that stretch reads LEVSESPGSV…DRGGRNIGVT (114 aa). The Extracellular segment spans residues 23–240; that stretch reads LEVSESPGSV…QVISPQPRSV (218 aa). Cystine bridges form between Cys44–Cys120 and Cys165–Cys215. N-linked (GlcNAc...) asparagine glycosylation occurs at Asn102. Residues 144–234 enclose the Ig-like C2-type domain; the sequence is PSAPQCQIQG…TCLLDLQVIS (91 aa). A helical transmembrane segment spans residues 241 to 261; the sequence is GVIAGAVGTGAVLIVICLALI. The Cytoplasmic segment spans residues 262 to 428; sequence SGAFFYWRSK…PAQSRAGSLV (167 aa). Arg375 is subject to Omega-N-methylarginine. Over residues 376–389 the composition is skewed to polar residues; it reads GSSPQVLPRNNGSV. The tract at residues 376-396 is disordered; it reads GSSPQVLPRNNGSVSRKPWPQ.

In terms of processing, N-glycosylated. As to expression, highly expressed in testis and detected in kidney and adrenal gland. In brain, expressed in commissure fibers of the corpus callosum and pyramidal cell layers of the dentate gyrus and hippocampus where it is probably expressed by both neurons and glial cells.

The protein resides in the cell membrane. Its function is as follows. Functions as a cell adhesion molecule through homophilic interaction. Stimulates cell growth. The chain is Immunoglobulin superfamily member 11 (Igsf11) from Mus musculus (Mouse).